We begin with the raw amino-acid sequence, 816 residues long: Sodium/hydrogen exchanger 1 (816 aa).

Residues 1 to 98 (MLLWSAVRGL…FPVLGIDYTH (98 aa)) are Extracellular-facing. Positions 37–50 (LQLSPTDSTTPDSQ) are enriched in polar residues. Residues 37-79 (LQLSPTDSTTPDSQPSRERSIGDVTTAPPEVTPESRPVNRSVT) form a disordered region. Asn75 is a glycosylation site (N-linked (GlcNAc...) asparagine). The helical transmembrane segment at 99–121 (VRTPFEISLWILLACLMKIGFHV) threads the bilayer. Residues 122–130 (IPTISSIVP) are Cytoplasmic-facing. The chain crosses the membrane as a helical span at residues 131 to 148 (ESCLLIVVGLLVGGLIKG). Topologically, residues 149–158 (VGEKPPFLQS) are extracellular. A helical membrane pass occupies residues 159–176 (EVFFLFLLPPIILDAGYF). Residues 177-186 (LPLRQFTENL) are Cytoplasmic-facing. The helical transmembrane segment at 187-215 (GTILIFAVVGTLWNAFFLGGLMYAVCLVG) threads the bilayer. Topologically, residues 216–222 (GEQINNI) are extracellular. A helical membrane pass occupies residues 223-249 (GLLDNLLFGSIISAVDPVAVLAVFEEI). Residues 250-252 (HIN) are Cytoplasmic-facing. Residues 253–283 (ELLHILVFGESLLNDAVTVVLYHLFEEFANY) traverse the membrane as a helical segment. The Extracellular segment spans residues 284 to 287 (DHVG). Residues 288 to 322 (IVDIVLGFLSFFVVALGGVFVGVVYGVIAAFTSRF) traverse the membrane as a helical segment. Residues 323 to 328 (TAHIRV) lie on the Cytoplasmic side of the membrane. The helical transmembrane segment at 329 to 341 (IEPLFVFLYSYMA) threads the bilayer. The Extracellular segment spans residues 342–350 (YLSAELFHL). The helical transmembrane segment at 351-371 (SGIMALIASGVVMRPYVEANI) threads the bilayer. Residues 372–373 (SH) lie on the Cytoplasmic side of the membrane. The chain crosses the membrane as a helical span at residues 374-404 (KSHTTIKYFLKMWSSVSETLIFIFLGVSTVA). At 405–410 (GSHHWN) the chain is on the extracellular side. The chain crosses the membrane as a helical span at residues 411 to 438 (WTFVISTLLFCLIARVLGVLGLTWFINK). Residues 439–444 (FRIVKL) are Cytoplasmic-facing. Residues 445-469 (TPKDQFIIAYGGLRGAIAFSLGYLL) form a helical membrane-spanning segment. Over 470 to 475 (DKKHFP) the chain is Extracellular. Residues 476–505 (MCDLFLTAIITVIFFTVFVQGMTIRPLVDL) traverse the membrane as a helical segment. An interaction with TESC region spans residues 503–545 (VDLLAVKKKQETKRSINEEIHTQFLDHLLTGIEDICGHYGHHH). Topologically, residues 506 to 816 (LAVKKKQETK…EGEPFIPKGQ (311 aa)) are cytoplasmic. The PI(4,5)P2-binding region stretch occupies residues 509–516 (KKKQETKR). The segment at 515 to 545 (KRSINEEIHTQFLDHLLTGIEDICGHYGHHH) is interaction with CHP2. Residues 540–545 (HYGHHH) form a confers pH-dependent PI(4,5)P2 binding region. Residues 552-560 (RFNKKYVKK) are PI(4,5)P2-binding region. A phosphoserine mark is found at Ser599 and Ser602. Thr603 is modified (phosphothreonine). 2 positions are modified to phosphoserine: Ser605 and Ser648. Residues 633-816 (KILRNNLQKT…EGEPFIPKGQ (184 aa)) are interaction with TESC. The segment at 633–816 (KILRNNLQKT…EGEPFIPKGQ (184 aa)) is interaction with CALM1. Residues 684 to 687 (LTVP) are interaction with PPP3CA. 3 positions are modified to phosphoserine: Ser693, Ser697, and Ser703. The interaction with PPP3CA stretch occupies residues 715–720 (PVITID). 6 positions are modified to phosphoserine: Ser723, Ser726, Ser729, Ser786, Ser788, and Ser797. The tract at residues 748-816 (PRVAEEAAEE…EGEPFIPKGQ (69 aa)) is disordered. Polar residues predominate over residues 783 to 792 (PSDSPSSQRM).

Belongs to the monovalent cation:proton antiporter 1 (CPA1) transporter (TC 2.A.36) family. In terms of assembly, homodimer; dimerization is crucial for its function. Oligomer. Interacts with CALM in a calcium-dependent manner. Interacts with TESC. Interacts (via the juxtamembrane region of the cytoplasmic C-terminal domain) with CHP1; the interaction occurs at the plasma membrane in a calcium-dependent manner. Interacts with CHP2; the interaction occurs in a calcium-dependent manner. Interacts with EZR; regulates the cytoskeletal interactions of SLC9A1 and promotes stress fiber formation. In terms of processing, ubiquitinated, leading to its degradation by the proteasome. Ubiquitination is reduced by CHP1. O-glycosylated. Post-translationally, palmitoylated; may play a major role in SLC9A1 regulation. In terms of processing, phosphorylation at Ser-648 by AKT1 reduces SLC9A1 binding to CALM1. Kidney and intestine.

It is found in the cell membrane. It localises to the basolateral cell membrane. It catalyses the reaction Na(+)(in) + H(+)(out) = Na(+)(out) + H(+)(in). The catalysed reaction is Li(+)(out) + H(+)(in) = Li(+)(in) + H(+)(out). The enzyme catalyses Li(+)(in) + Na(+)(out) = Li(+)(out) + Na(+)(in). Activated at acidic pHs. Inhibited by cariporide and eniporide. Phosphatidylinositol 4,5-bisphosphate (PI(4,5)P2) and phosphatidylinositol 3,4,5-trisphosphate (PI(3,4,5)P3) bind and differentially regulate SLC9A1 activity. Functionally, electroneutral Na(+) /H(+) antiporter that extrudes Na(+) in exchange for external protons driven by the inward sodium ion chemical gradient, protecting cells from acidification that occurs from metabolism. Exchanges intracellular H(+) ions for extracellular Na(+) in 1:1 stoichiometry. Plays a key role in maintening intracellular pH neutral and cell volume, and thus is important for cell growth, proliferation, migration and survival. In addition, can transport lithium Li(+) and functions also as a Na(+)/Li(+) antiporter. SLC9A1 also functions in membrane anchoring and organization of scaffolding complexes that coordinate signaling inputs. This Oryctolagus cuniculus (Rabbit) protein is Sodium/hydrogen exchanger 1 (SLC9A1).